Reading from the N-terminus, the 518-residue chain is Ribonuclease Y (518 aa).

A helical transmembrane segment spans residues 2-22 (GSIIISALLALVIGAVVGFFV). The 64-residue stretch at 208-271 (TVSVVNLPND…ETARIALDKL (64 aa)) folds into the KH domain. Residues 334–427 (VLKHSVEVAF…VAAADALSAA (94 aa)) form the HD domain.

The protein belongs to the RNase Y family.

The protein localises to the cell membrane. Endoribonuclease that initiates mRNA decay. The protein is Ribonuclease Y of Geobacillus thermodenitrificans (strain NG80-2).